A 135-amino-acid chain; its full sequence is Large ribosomal subunit protein bL17 (135 aa).

Belongs to the bacterial ribosomal protein bL17 family. As to quaternary structure, part of the 50S ribosomal subunit. Contacts protein L32.

This Listeria welshimeri serovar 6b (strain ATCC 35897 / DSM 20650 / CCUG 15529 / CIP 8149 / NCTC 11857 / SLCC 5334 / V8) protein is Large ribosomal subunit protein bL17.